Reading from the N-terminus, the 552-residue chain is MDTLTHVLVLPEALERLDSPSIIIPRTANTSEEVVPYAHLTDLTQSLQHDLATLGISVGSKVAIVLPNGLAFVTVLLATIRQRAISAPIHPNSTREECKQIFSLMTPDLVAVMPSEASPAAAAVLAAQDLGLPVASCHRYPQSGRLSFCLALKLVNRGDETSNPSPCMVYSRDHVLAEDKVLELFTSGTTGAPKSVQLTHTNILVAMRIITSAHKITFKDRSFLITPLFHIIGIAGSLLPTLFTGGCAVIPASLPATFWQDCQDYSITWYHAVPTLHHLLLSFPMPKGGVPATLRFIRSGGSDMSLDLFNRLQKLGVPLLEVYGMTETAPAIFCNPFPVTETSTAIKRHPGQYPIPDAVDVMILPPERAPGLEPNGDLDGIENTEPVARLTKELGVKGEICLRGKNIMAGYTNNPAANREAFLPNGFFRTGDLGVIKPRQYLALIGRVKEIINKGGEKISPAEIEHVARLHDQVNDAACFRISDEIYGEVIGLAITAKSAITITAVKKHMRHHVVMFKVPDKVLLVQEIPYNRTGKPRRTLLSEMYDRGELA.

An AMP-binding site is contributed by glutamate 183–lysine 194. An AMP-binding region spans residues glutamate 463–lysine 536.

It belongs to the ATP-dependent AMP-binding enzyme family.

It participates in mycotoxin biosynthesis. In terms of biological role, acyl-CoA synthetase; part of the gene cluster that mediates the biosynthesis of fumonisins B1 (FB1), B2 (FB2), B3 (FB3), and B4 (FB4), which are carcinogenic mycotoxins. Within the pathway, FUM10 is involved the addition of the tricarballylic moieties to the carbon backbone. FUM10 catalyzes the CoA activation of citrate to form tricarballylic acid. The biosynthesis starts with the FUM1-catalyzed carbon chain assembly from one molecule of acetyl-CoA, eight molecules of malonyl-CoA, and two molecules of methionine (in S-adenosyl form). The C18 polyketide chain is released from the enzyme by a nucleophilic attack of a carbanion, which is derived from R-carbon of alanine by decarboxylation, on the carbonyl carbon of polyketide acyl chain. This step is catalyzed by the pyridoxal 5'-phosphate-dependent aminoacyl transferase FUM8. The resultant 3-keto intermediate is then stereospecifically reduced to a 3-hydroxyl product by reductase FUM13. Subsequent oxidations at C-10 by the cytochrome P450 monooxygenase FUM2, C-14 and C-15 by FUM6, FUM12 or FUM15, tricarballylic esterification of the hydroxyl groups on C-14 and C-15 by acyltransferase FUM14, and C-5 hydroxylation by 2-keto-glutarate-dependent dioxygenase FUM3 furnish the biosynthesis of fumonisins. The tricarballylic moieties are most likely derived from the citric acid cycle, and their addition to the carbon backbone may involve FUM7, FUM10, FUM11 and FUM14. In Gibberella moniliformis (strain M3125 / FGSC 7600) (Maize ear and stalk rot fungus), this protein is Acyl-CoA synthetase FUM10.